The sequence spans 285 residues: 2,3,4,5-tetrahydropyridine-2,6-dicarboxylate N-succinyltransferase (285 aa).

Residues arginine 111 and aspartate 148 each coordinate substrate.

It belongs to the transferase hexapeptide repeat family. Homotrimer.

Its subcellular location is the cytoplasm. The catalysed reaction is (S)-2,3,4,5-tetrahydrodipicolinate + succinyl-CoA + H2O = (S)-2-succinylamino-6-oxoheptanedioate + CoA. Its pathway is amino-acid biosynthesis; L-lysine biosynthesis via DAP pathway; LL-2,6-diaminopimelate from (S)-tetrahydrodipicolinate (succinylase route): step 1/3. The polypeptide is 2,3,4,5-tetrahydropyridine-2,6-dicarboxylate N-succinyltransferase (Sinorhizobium fredii (strain NBRC 101917 / NGR234)).